Consider the following 144-residue polypeptide: MKQFYIVDSSMLPEVVGKVIAARALLQNGEVKQVSEAVKQVGISRGTYYKYKDYVFLRDPEMASRKAVISLMLHHDRGILSEVLTTMSQVQASIVTINQNIPIHNWASVVMSFDISALQGTLDDLVTKLGDIRGVSDVHLVSVE.

In terms of domain architecture, ACT spans 68 to 143; sequence VISLMLHHDR…GVSDVHLVSV (76 aa).

This sequence belongs to the UPF0735 family.

The sequence is that of UPF0735 ACT domain-containing protein LSEI_1046 from Lacticaseibacillus paracasei (strain ATCC 334 / BCRC 17002 / CCUG 31169 / CIP 107868 / KCTC 3260 / NRRL B-441) (Lactobacillus paracasei).